The chain runs to 538 residues: CTP synthase (538 aa).

The segment at Met1–Ile266 is amidoligase domain. Position 14 (Ser14) interacts with CTP. Residue Ser14 coordinates UTP. Residues Ser15–Leu20 and Asp72 contribute to the ATP site. Asp72 and Glu140 together coordinate Mg(2+). Residues Asp147–Glu149, Lys187–Gln192, and Lys223 contribute to the CTP site. UTP contacts are provided by residues Lys187–Gln192 and Lys223. Residue Lys239 to Val241 participates in ATP binding. A Glutamine amidotransferase type-1 domain is found at Asn291 to Lys533. Gly353 provides a ligand contact to L-glutamine. Cys380 (nucleophile; for glutamine hydrolysis) is an active-site residue. Residues Leu381–Gln384, Glu404, and Arg461 contribute to the L-glutamine site. Residues His506 and Glu508 contribute to the active site.

The protein belongs to the CTP synthase family. In terms of assembly, homotetramer.

It carries out the reaction UTP + L-glutamine + ATP + H2O = CTP + L-glutamate + ADP + phosphate + 2 H(+). It catalyses the reaction L-glutamine + H2O = L-glutamate + NH4(+). The catalysed reaction is UTP + NH4(+) + ATP = CTP + ADP + phosphate + 2 H(+). Its pathway is pyrimidine metabolism; CTP biosynthesis via de novo pathway; CTP from UDP: step 2/2. Its activity is regulated as follows. Allosterically activated by GTP, when glutamine is the substrate; GTP has no effect on the reaction when ammonia is the substrate. The allosteric effector GTP functions by stabilizing the protein conformation that binds the tetrahedral intermediate(s) formed during glutamine hydrolysis. Inhibited by the product CTP, via allosteric rather than competitive inhibition. Functionally, catalyzes the ATP-dependent amination of UTP to CTP with either L-glutamine or ammonia as the source of nitrogen. Regulates intracellular CTP levels through interactions with the four ribonucleotide triphosphates. This is CTP synthase from Syntrophus aciditrophicus (strain SB).